Here is a 331-residue protein sequence, read N- to C-terminus: Pseudouridylate synthase TRUB2, mitochondrial (331 aa).

Residues 1-10 constitute a mitochondrion transit peptide; the sequence is MGSAGLSRLH. The active-site Nucleophile is aspartate 98. The segment at 296 to 331 is disordered; sequence KSLSPGLDTKQLPSPGWSWDSQGPSSTLGLERGAGQ. The span at 314–323 shows a compositional bias: polar residues; the sequence is WDSQGPSSTL.

The protein belongs to the pseudouridine synthase TruB family. As to quaternary structure, forms a regulatory protein-RNA complex, consisting of RCC1L, NGRN, RPUSD3, RPUSD4, TRUB2, FASTKD2 and 16S mt-rRNA.

The protein resides in the mitochondrion matrix. It carries out the reaction a uridine in mRNA = a pseudouridine in mRNA. It catalyses the reaction uridine(55) in tRNA = pseudouridine(55) in tRNA. Functionally, minor enzyme contributing to the isomerization of uridine to pseudouridine (pseudouridylation) of specific mitochondrial mRNAs (mt-mRNAs) such as COXI and COXIII mt-mRNAs. As a component of a functional protein-RNA module, consisting of RCC1L, NGRN, RPUSD3, RPUSD4, TRUB2, FASTKD2 and 16S mitochondrial ribosomal RNA (16S mt-rRNA), controls 16S mt-rRNA abundance and is required for intra-mitochondrial translation. Also catalyzes pseudouridylation of some tRNAs, including synthesis of pseudouridine(55) from uracil-55, in the psi GC loop of a subset of tRNAs. This chain is Pseudouridylate synthase TRUB2, mitochondrial, found in Homo sapiens (Human).